The following is a 552-amino-acid chain: Dihydroxy-acid dehydratase (552 aa).

Mg(2+) is bound at residue aspartate 78. Cysteine 119 serves as a coordination point for [2Fe-2S] cluster. Residues aspartate 120 and lysine 121 each contribute to the Mg(2+) site. At lysine 121 the chain carries N6-carboxylysine. Residue cysteine 190 participates in [2Fe-2S] cluster binding. Glutamate 441 serves as a coordination point for Mg(2+). Serine 467 (proton acceptor) is an active-site residue.

The protein belongs to the IlvD/Edd family. Homodimer. The cofactor is [2Fe-2S] cluster. It depends on Mg(2+) as a cofactor.

The enzyme catalyses (2R)-2,3-dihydroxy-3-methylbutanoate = 3-methyl-2-oxobutanoate + H2O. It carries out the reaction (2R,3R)-2,3-dihydroxy-3-methylpentanoate = (S)-3-methyl-2-oxopentanoate + H2O. It functions in the pathway amino-acid biosynthesis; L-isoleucine biosynthesis; L-isoleucine from 2-oxobutanoate: step 3/4. The protein operates within amino-acid biosynthesis; L-valine biosynthesis; L-valine from pyruvate: step 3/4. Functionally, functions in the biosynthesis of branched-chain amino acids. Catalyzes the dehydration of (2R,3R)-2,3-dihydroxy-3-methylpentanoate (2,3-dihydroxy-3-methylvalerate) into 2-oxo-3-methylpentanoate (2-oxo-3-methylvalerate) and of (2R)-2,3-dihydroxy-3-methylbutanoate (2,3-dihydroxyisovalerate) into 2-oxo-3-methylbutanoate (2-oxoisovalerate), the penultimate precursor to L-isoleucine and L-valine, respectively. The protein is Dihydroxy-acid dehydratase of Ignicoccus hospitalis (strain KIN4/I / DSM 18386 / JCM 14125).